A 320-amino-acid chain; its full sequence is Replication-associated protein ORF2 (320 aa).

Catalysis depends on O-(5'-phospho-DNA)-tyrosine intermediate residues Tyr-188 and Tyr-192.

This sequence belongs to the microviridae Rep protein family.

It catalyses the reaction ATP + (deoxyribonucleotide)n-3'-hydroxyl + 5'-phospho-(deoxyribonucleotide)m = (deoxyribonucleotide)n+m + AMP + diphosphate.. Plays an essential role in viral DNA replication. Binds the origin of replication and cleaves the dsDNA replicative form I (RFI) and becomes covalently bound to it via phosphotyrosine bond, generating the dsDNA replicative form II (RFII). In turn, viral DNA replication initiates at the 3'-OH of the cleavage site. After one round of rolling circle synthesis, protein ORF2 is linked to the newly synthesized ssDNA and joins the ends of the displaced strand to generate a circular single-stranded molecule ready to be packed into a virion. The chain is Replication-associated protein ORF2 from Spiroplasma virus 4 (SpV4).